The sequence spans 900 residues: Probable dipeptidyl-aminopeptidase B (900 aa).

A disordered region spans residues 1–83 (MARTDQGLGA…DILSHPRDKS (83 aa)). Residues 1–90 (MARTDQGLGA…DKSKRSRGSR (90 aa)) lie on the Cytoplasmic side of the membrane. Low complexity predominate over residues 24 to 39 (NSFSSTDSLSTDGSLF). Positions 44 to 55 (NATQFQKSTQLP) are enriched in polar residues. Residues 91 to 111 (WIWVIGLLCLGGWILAFILFW) traverse the membrane as a helical; Signal-anchor for type II membrane protein segment. Topologically, residues 112-900 (GRRNNNSDIS…HHVGSALAAT (789 aa)) are vacuolar. N-linked (GlcNAc...) asparagine glycosylation is found at asparagine 150, asparagine 195, asparagine 348, asparagine 410, asparagine 514, asparagine 639, and asparagine 644. Catalysis depends on serine 753, which acts as the Charge relay system. N-linked (GlcNAc...) asparagine glycosylation is present at asparagine 812. Catalysis depends on charge relay system residues aspartate 830 and histidine 863.

This sequence belongs to the peptidase S9B family.

The protein localises to the vacuole membrane. The catalysed reaction is Release of an N-terminal dipeptide, Xaa-Yaa-|-Zaa-, from a polypeptide, preferentially when Yaa is Pro, provided Zaa is neither Pro nor hydroxyproline.. In terms of biological role, type IV dipeptidyl-peptidase which removes N-terminal dipeptides sequentially from polypeptides having unsubstituted N-termini provided that the penultimate residue is proline. The chain is Probable dipeptidyl-aminopeptidase B (dapB) from Talaromyces stipitatus (strain ATCC 10500 / CBS 375.48 / QM 6759 / NRRL 1006) (Penicillium stipitatum).